The chain runs to 238 residues: MSNKDICVKISGSKKIREAREKVKSDTLYNLTNAVAQLKSASYVKFDPTLEIVMKLGIDPRHSDQIVRGVVNLPAGTGKTIRVAVICKEEREEEAKSAGADLVGSINIIDEIKAGQINFDVCIATPDMMSMISSVARILGPKGLMPNPKLGTVTLDIKNAIKNAKSGQVEYRAEKAGIIHAGLGKLSFSDQDLLKNLNAFIGAVIKAKPVGLKGNYLKAIYLSSTMGASVQIDLTSIS.

Belongs to the universal ribosomal protein uL1 family. As to quaternary structure, part of the 50S ribosomal subunit.

Functionally, binds directly to 23S rRNA. The L1 stalk is quite mobile in the ribosome, and is involved in E site tRNA release. Its function is as follows. Protein L1 is also a translational repressor protein, it controls the translation of the L11 operon by binding to its mRNA. The polypeptide is Large ribosomal subunit protein uL1 (Rickettsia prowazekii (strain Madrid E)).